Consider the following 295-residue polypeptide: Phosphatidylserine decarboxylase proenzyme (295 aa).

Residues aspartate 101, histidine 158, and serine 262 each act as charge relay system; for autoendoproteolytic cleavage activity in the active site. Serine 262 acts as the Schiff-base intermediate with substrate; via pyruvic acid; for decarboxylase activity in catalysis. Serine 262 is subject to Pyruvic acid (Ser); by autocatalysis.

It belongs to the phosphatidylserine decarboxylase family. PSD-B subfamily. Prokaryotic type I sub-subfamily. As to quaternary structure, heterodimer of a large membrane-associated beta subunit and a small pyruvoyl-containing alpha subunit. Requires pyruvate as cofactor. Is synthesized initially as an inactive proenzyme. Formation of the active enzyme involves a self-maturation process in which the active site pyruvoyl group is generated from an internal serine residue via an autocatalytic post-translational modification. Two non-identical subunits are generated from the proenzyme in this reaction, and the pyruvate is formed at the N-terminus of the alpha chain, which is derived from the carboxyl end of the proenzyme. The autoendoproteolytic cleavage occurs by a canonical serine protease mechanism, in which the side chain hydroxyl group of the serine supplies its oxygen atom to form the C-terminus of the beta chain, while the remainder of the serine residue undergoes an oxidative deamination to produce ammonia and the pyruvoyl prosthetic group on the alpha chain. During this reaction, the Ser that is part of the protease active site of the proenzyme becomes the pyruvoyl prosthetic group, which constitutes an essential element of the active site of the mature decarboxylase.

It is found in the cell membrane. The enzyme catalyses a 1,2-diacyl-sn-glycero-3-phospho-L-serine + H(+) = a 1,2-diacyl-sn-glycero-3-phosphoethanolamine + CO2. It functions in the pathway phospholipid metabolism; phosphatidylethanolamine biosynthesis; phosphatidylethanolamine from CDP-diacylglycerol: step 2/2. Functionally, catalyzes the formation of phosphatidylethanolamine (PtdEtn) from phosphatidylserine (PtdSer). This is Phosphatidylserine decarboxylase proenzyme from Pasteurella multocida (strain Pm70).